The primary structure comprises 711 residues: Dendrin (711 aa).

4 disordered regions span residues 1-22, 49-273, 324-446, and 479-677; these read MLDGPLFSEGPDSPRELQDEES, APSR…KKRL, DLNS…SQGL, and PSGV…AELS. Over residues 75–84 the composition is skewed to pro residues; sequence PGSPQPPPRR. Residues 102–134 are a coiled coil; the sequence is LAEVRAREQEKRKAASQEREAKETERKRRKAGG. Residues 105–127 show a composition bias toward basic and acidic residues; sequence VRAREQEKRKAASQEREAKETER. The nuclear localization stretch occupies residues 113-131; sequence RKAASQEREAKETERKRRK. The segment covering 150–161 has biased composition (low complexity); sequence APRVAQLAGLPA. Positions 186-236 are interaction with MAGI2; that stretch reads GSAWAGPWGGRRPGPPSYEAHLLLRGSAGTAPRRRWDRPPPYVAPPSYEGP. Low complexity-rich tracts occupy residues 252 to 262 and 346 to 356; these read PTSSAPAATPA and APAGSATAAPC. Residues 341–436 are interaction with ACTN1; it reads AGTEIAPAGS…LEGWKATRRA (96 aa). Position 389 is a phosphoserine (Ser389). Residues 408–709 are interaction with CD2AP and NPHS1; that stretch reads GGTGWRESLG…IRGTQQGNRK (302 aa). The span at 529–546 shows a compositional bias: basic and acidic residues; the sequence is GEAEGGRPGDSTLEERTF.

In terms of assembly, forms a ternary complex with MAGI2 and SH3KBP1; recruits DDN to the cytoplasm. Interacts with MAGI1. Interacts with ACTN1 and may interact with WWC1. Interacts with the podocyte slit diaphragm proteins CD2AP, NPHS1 and NPHS2; the interaction with CD2AP and NPHS1 is direct. Specifically expressed in brain and kidney. Expressed in kidney glomerular capillary loops (at protein level).

It is found in the cell projection. It localises to the dendritic spine membrane. The protein resides in the cytoplasm. Its subcellular location is the endoplasmic reticulum membrane. The protein localises to the perikaryon. It is found in the nucleus. Functionally, promotes apoptosis of kidney glomerular podocytes. Podocytes are highly specialized cells essential to the ultrafiltration of blood, resulting in the extraction of urine and the retention of protein. This chain is Dendrin (DDN), found in Homo sapiens (Human).